Reading from the N-terminus, the 372-residue chain is 3-dehydroquinate synthase (372 aa).

NAD(+) is bound by residues 116–120 (GVVGD), 140–141 (TT), Lys153, Lys162, and 180–183 (TLKT). Zn(2+)-binding residues include Glu195, His260, and His277.

It belongs to the sugar phosphate cyclases superfamily. Dehydroquinate synthase family. It depends on NAD(+) as a cofactor. Co(2+) is required as a cofactor. Requires Zn(2+) as cofactor.

Its subcellular location is the cytoplasm. It carries out the reaction 7-phospho-2-dehydro-3-deoxy-D-arabino-heptonate = 3-dehydroquinate + phosphate. The protein operates within metabolic intermediate biosynthesis; chorismate biosynthesis; chorismate from D-erythrose 4-phosphate and phosphoenolpyruvate: step 2/7. Catalyzes the conversion of 3-deoxy-D-arabino-heptulosonate 7-phosphate (DAHP) to dehydroquinate (DHQ). The sequence is that of 3-dehydroquinate synthase from Prochlorococcus marinus (strain MIT 9313).